A 205-amino-acid polypeptide reads, in one-letter code: Endoribonuclease YbeY (205 aa).

Residues His-124, His-128, and His-134 each contribute to the Zn(2+) site. The disordered stretch occupies residues 162–205; it reads GTAPVAPGGEAQVPNEALETSGKRQDHSLGEILPGGMSRRLAGS.

Belongs to the endoribonuclease YbeY family. Zn(2+) is required as a cofactor.

It is found in the cytoplasm. Single strand-specific metallo-endoribonuclease involved in late-stage 70S ribosome quality control and in maturation of the 3' terminus of the 16S rRNA. The protein is Endoribonuclease YbeY of Beijerinckia indica subsp. indica (strain ATCC 9039 / DSM 1715 / NCIMB 8712).